The chain runs to 193 residues: Cysteine and glycine-rich protein 2 (193 aa).

Positions 10-61 constitute an LIM zinc-binding 1 domain; it reads CGACGRTVYHAEEVQCDGRTFHRCCFLCMVCRKNLDSTTVAIHDEEIYCKSC. The Nuclear localization signal signature appears at 64–69; it reads KKYGPK. Lysine 91 participates in a covalent cross-link: Glycyl lysine isopeptide (Lys-Gly) (interchain with G-Cter in SUMO2). Lysine 112 and lysine 131 each carry N6-acetyllysine. An LIM zinc-binding 2 domain is found at 119–170; that stretch reads CSRCGDSVYAAEKIIGAGKPWHKNCFRCAKCGKSLESTTLTEKEGEIYCKGC. Lysine 137 carries the N6-acetyllysine; alternate modification. An N6-succinyllysine; alternate modification is found at lysine 137. At lysine 161 the chain carries N6-acetyllysine.

In terms of assembly, interacts with KAT14. The LIM domain 1 is necessary and sufficient for this interaction. Interacts with GLRX3. In terms of tissue distribution, highly expressed in the aorta; weakly found in the kidney, thymus, and intestine. Barely detectable in brain, testis, esophagus, lung, liver, aortic adventitia, vena cava, or uterus; not present in heart and skeletal muscle.

Its subcellular location is the nucleus. Drastically down-regulated in response to PDGF-BB or cell injury, that promote smooth muscle cell proliferation and dedifferentiation. Seems to play a role in the development of the embryonic vascular system. The protein is Cysteine and glycine-rich protein 2 (Csrp2) of Rattus norvegicus (Rat).